The chain runs to 111 residues: Probable 4-amino-4-deoxy-L-arabinose-phosphoundecaprenol flippase subunit ArnE (111 aa).

The Cytoplasmic segment spans residues 1-35 (MIWLTLVFASLLSVAGQLCQKQATCFVAINKRRKH). Residues 36-56 (IVLWLGLALACLGLAMVLWLL) traverse the membrane as a helical segment. In terms of domain architecture, EamA spans 40-109 (LGLALACLGL…IIGGIVILGS (70 aa)). The Periplasmic portion of the chain corresponds to 57–60 (VLQN). The helical transmembrane segment at 61 to 81 (VPVGIAYPMLSLNFVWVTLAA) threads the bilayer. At 82-87 (VKLWHE) the chain is on the cytoplasmic side. The helical transmembrane segment at 88-108 (PVSPRHWCGVAFIIGGIVILG) threads the bilayer. The Periplasmic portion of the chain corresponds to 109–111 (STV).

This sequence belongs to the ArnE family. In terms of assembly, heterodimer of ArnE and ArnF.

Its subcellular location is the cell inner membrane. Its pathway is bacterial outer membrane biogenesis; lipopolysaccharide biosynthesis. Its function is as follows. Translocates 4-amino-4-deoxy-L-arabinose-phosphoundecaprenol (alpha-L-Ara4N-phosphoundecaprenol) from the cytoplasmic to the periplasmic side of the inner membrane. The protein is Probable 4-amino-4-deoxy-L-arabinose-phosphoundecaprenol flippase subunit ArnE of Escherichia coli (strain ATCC 8739 / DSM 1576 / NBRC 3972 / NCIMB 8545 / WDCM 00012 / Crooks).